The primary structure comprises 201 residues: Recombination protein RecR (201 aa).

Residues 57–74 form a C4-type zinc finger; it reads CRICGFITSKDDDPCVIC. One can recognise a Toprim domain in the interval 82–178; sequence SKIFVVENSQ…KVTRLARGLS (97 aa).

Belongs to the RecR family.

May play a role in DNA repair. It seems to be involved in an RecBC-independent recombinational process of DNA repair. It may act with RecF and RecO. The sequence is that of Recombination protein RecR from Oenococcus oeni (strain ATCC BAA-331 / PSU-1).